The chain runs to 204 residues: MSAQDKLIKPSHLITMDDIIREGNPTLRAVAKEVSLPLCDEDILLGEKMMQFLKHSQNPVMAEKLGLRAGVGLAAPQIDVSKRIIAVLVPNLPDKEGNPPKEAYSWQEVLYNPKIVSHSVQDAALSDGEGCLSVDRVVEGYVVRHARVTVDYYDKEGQQHRIKLKGYNAIVVQHEIDHINGVLFYDRINAKNPFETKEELLILD.

Residues C131 and H174 each coordinate Fe cation. The active site involves E175. H178 lines the Fe cation pocket.

Belongs to the polypeptide deformylase family. Requires Fe(2+) as cofactor.

The catalysed reaction is N-terminal N-formyl-L-methionyl-[peptide] + H2O = N-terminal L-methionyl-[peptide] + formate. In terms of biological role, removes the formyl group from the N-terminal Met of newly synthesized proteins. Requires at least a dipeptide for an efficient rate of reaction. N-terminal L-methionine is a prerequisite for activity but the enzyme has broad specificity at other positions. In Streptococcus pyogenes serotype M49 (strain NZ131), this protein is Peptide deformylase.